The primary structure comprises 573 residues: MLO-like protein 11 (573 aa).

Residues 1 to 19 are Extracellular-facing; that stretch reads MGEGEENGNEADSNERSLA. A helical membrane pass occupies residues 20–40; the sequence is LSPTWSVAIVLTVFVVVSLIV. Over 41–69 the chain is Cytoplasmic; sequence ERSIYRLSTWLRKTKRKPMFAALEKMKEE. Residues 70–90 form a helical membrane-spanning segment; that stretch reads LMLLGFISLLLTATSSTIANI. Residues 91–163 are Extracellular-facing; it reads CVPSSFYNDR…SYEGLEQLHR (73 aa). The helical transmembrane segment at 164-184 threads the bilayer; that stretch reads FIFIMAVTHVTYSCLTMLLAI. The Cytoplasmic portion of the chain corresponds to 185–287; that stretch reads VKIHSWRIWE…IRSMEEEFQR (103 aa). 2 helical membrane passes run 288–308 and 309–329; these read IVGV…FNIK and GSNL…LVGA. Residues 330 to 371 lie on the Cytoplasmic side of the membrane; that stretch reads KLQHVIATLALENAGLTEYPSGVKLRPRDELFWFNKPELLLS. A helical transmembrane segment spans residues 372–392; sequence LIHFILFQNSFELASFFWFWW. At 393–411 the chain is on the extracellular side; sequence QFGYSSCFLKNHYLVYFRL. A helical transmembrane segment spans residues 412-432; sequence LLGFAGQFLCSYSTLPLYALV. Residues 433-573 lie on the Cytoplasmic side of the membrane; that stretch reads TQMGTNYKAA…SSSLPSEKRV (141 aa). Residues 446–467 form a calmodulin-binding region; that stretch reads QRIRETIRGWGKATRRKRRHGL. Disordered regions lie at residues 500–532 and 554–573; these read EQQR…TSSR and RSEP…EKRV. Residues 507 to 516 show a composition bias toward low complexity; it reads EQGTTELELQ. Residues 561–573 show a composition bias toward polar residues; that stretch reads LSRSSSLPSEKRV.

The protein belongs to the MLO family.

Its subcellular location is the membrane. May be involved in modulation of pathogen defense and leaf cell death. Activity seems to be regulated by Ca(2+)-dependent calmodulin binding and seems not to require heterotrimeric G proteins. The sequence is that of MLO-like protein 11 (MLO11) from Arabidopsis thaliana (Mouse-ear cress).